A 210-amino-acid chain; its full sequence is Outer-membrane lipoprotein carrier protein (210 aa).

A signal peptide spans 1 to 22 (MRAFKWALAIGATLALPLTAQA).

Belongs to the LolA family. In terms of assembly, monomer.

Its subcellular location is the periplasm. Participates in the translocation of lipoproteins from the inner membrane to the outer membrane. Only forms a complex with a lipoprotein if the residue after the N-terminal Cys is not an aspartate (The Asp acts as a targeting signal to indicate that the lipoprotein should stay in the inner membrane). The sequence is that of Outer-membrane lipoprotein carrier protein from Chromohalobacter salexigens (strain ATCC BAA-138 / DSM 3043 / CIP 106854 / NCIMB 13768 / 1H11).